The following is a 312-amino-acid chain: Olfactory receptor 6N1 (312 aa).

The Extracellular portion of the chain corresponds to M1–I25. N5 is a glycosylation site (N-linked (GlcNAc...) asparagine). Residues Y26 to F46 traverse the membrane as a helical segment. Over L47 to R54 the chain is Cytoplasmic. The chain crosses the membrane as a helical span at residues L55–A75. Residues A76–L99 are Extracellular-facing. A disulfide bond links C97 and C189. The helical transmembrane segment at Q100–Y120 threads the bilayer. The Cytoplasmic portion of the chain corresponds to D121–T139. A helical membrane pass occupies residues L140–I160. At S161–L197 the chain is on the extracellular side. A helical transmembrane segment spans residues V198–S217. Residues Y218 to A237 lie on the Cytoplasmic side of the membrane. A helical membrane pass occupies residues I238–M258. The Extracellular portion of the chain corresponds to Y259–D271. Residues Q272 to L292 traverse the membrane as a helical segment. The Cytoplasmic segment spans residues R293–A312.

Belongs to the G-protein coupled receptor 1 family.

Its subcellular location is the cell membrane. Odorant receptor. This is Olfactory receptor 6N1 (OR6N1) from Homo sapiens (Human).